Reading from the N-terminus, the 394-residue chain is Elongation factor Tu (394 aa).

A tr-type G domain is found at 10–204 (KPHVNVGTIG…AMDDYIPAPE (195 aa)). The G1 stretch occupies residues 19–26 (GHVDHGKT). 19–26 (GHVDHGKT) contacts GTP. Residue Thr-26 coordinates Mg(2+). Residues 60-64 (GITIN) are G2. The tract at residues 81–84 (DCPG) is G3. GTP is bound by residues 81-85 (DCPGH) and 136-139 (NKCD). A G4 region spans residues 136–139 (NKCD). A G5 region spans residues 174 to 176 (SAL).

The protein belongs to the TRAFAC class translation factor GTPase superfamily. Classic translation factor GTPase family. EF-Tu/EF-1A subfamily. Monomer.

The protein localises to the cytoplasm. The enzyme catalyses GTP + H2O = GDP + phosphate + H(+). In terms of biological role, GTP hydrolase that promotes the GTP-dependent binding of aminoacyl-tRNA to the A-site of ribosomes during protein biosynthesis. The chain is Elongation factor Tu from Francisella tularensis subsp. tularensis (strain FSC 198).